A 235-amino-acid chain; its full sequence is Small ribosomal subunit protein uS2c (235 aa).

Belongs to the universal ribosomal protein uS2 family.

The protein resides in the plastid. Its subcellular location is the chloroplast. This is Small ribosomal subunit protein uS2c (rps2) from Zygnema circumcarinatum (Green alga).